We begin with the raw amino-acid sequence, 111 residues long: MAVKIRLARGGAKKRPFYRVVVANATAPRDGDFLEKVGTYNPMLASDNSERVVLKKDRIEYWLSTGAKPTERVAKFIEQAGVILPEKVKKEMAVKAKNRKPRPSKKEAKEA.

This sequence belongs to the bacterial ribosomal protein bS16 family.

In Rickettsia canadensis (strain McKiel), this protein is Small ribosomal subunit protein bS16.